The chain runs to 173 residues: Adenine phosphoribosyltransferase (173 aa).

Belongs to the purine/pyrimidine phosphoribosyltransferase family. In terms of assembly, homodimer.

The protein resides in the cytoplasm. The enzyme catalyses AMP + diphosphate = 5-phospho-alpha-D-ribose 1-diphosphate + adenine. It functions in the pathway purine metabolism; AMP biosynthesis via salvage pathway; AMP from adenine: step 1/1. Catalyzes a salvage reaction resulting in the formation of AMP, that is energically less costly than de novo synthesis. This is Adenine phosphoribosyltransferase from Methanococcus vannielii (strain ATCC 35089 / DSM 1224 / JCM 13029 / OCM 148 / SB).